Reading from the N-terminus, the 281-residue chain is Eukaryotic translation initiation factor 3 subunit G (281 aa).

Residues 1 to 32 (MSRPAGRTDWAEEDDETELALPSQTVVKNKDG) are disordered. In terms of domain architecture, RRM spans 202 to 280 (ATLRVTNVSE…LILRVEFAKK (79 aa)).

It belongs to the eIF-3 subunit G family. In terms of assembly, component of the eukaryotic translation initiation factor 3 (eIF-3) complex.

Its subcellular location is the cytoplasm. Functionally, RNA-binding component of the eukaryotic translation initiation factor 3 (eIF-3) complex, which is involved in protein synthesis of a specialized repertoire of mRNAs and, together with other initiation factors, stimulates binding of mRNA and methionyl-tRNAi to the 40S ribosome. The eIF-3 complex specifically targets and initiates translation of a subset of mRNAs involved in cell proliferation. This subunit can bind 18S rRNA. In Phaeosphaeria nodorum (strain SN15 / ATCC MYA-4574 / FGSC 10173) (Glume blotch fungus), this protein is Eukaryotic translation initiation factor 3 subunit G.